The sequence spans 212 residues: Ribosomal RNA small subunit methyltransferase G (212 aa).

Residues Gly-73, Phe-78, 96–98, 124–125, and Arg-141 contribute to the S-adenosyl-L-methionine site; these read ESS and VE.

Belongs to the methyltransferase superfamily. RNA methyltransferase RsmG family.

The protein localises to the cytoplasm. In terms of biological role, specifically methylates the N7 position of a guanine in 16S rRNA. In Aster yellows witches'-broom phytoplasma (strain AYWB), this protein is Ribosomal RNA small subunit methyltransferase G.